Reading from the N-terminus, the 84-residue chain is Translation initiation factor IF-1, chloroplastic (84 aa).

The 72-residue stretch at 1–72 (MKKQNLVEME…SKGRITYRLR (72 aa)) folds into the S1-like domain.

This sequence belongs to the IF-1 family. Component of the 30S ribosomal translation pre-initiation complex which assembles on the 30S ribosome in the order IF-2 and IF-3, IF-1 and N-formylmethionyl-tRNA(fMet); mRNA recruitment can occur at any time during PIC assembly.

Its subcellular location is the plastid. The protein localises to the chloroplast. In terms of biological role, one of the essential components for the initiation of protein synthesis. Stabilizes the binding of IF-2 and IF-3 on the 30S subunit to which N-formylmethionyl-tRNA(fMet) subsequently binds. Helps modulate mRNA selection, yielding the 30S pre-initiation complex (PIC). Upon addition of the 50S ribosomal subunit IF-1, IF-2 and IF-3 are released leaving the mature 70S translation initiation complex. The protein is Translation initiation factor IF-1, chloroplastic of Spirogyra maxima (Green alga).